A 228-amino-acid chain; its full sequence is Phosphatidylserine decarboxylase proenzyme (228 aa).

Ser-197 (schiff-base intermediate with substrate; via pyruvic acid) is an active-site residue. Residue Ser-197 is modified to Pyruvic acid (Ser); by autocatalysis.

Belongs to the phosphatidylserine decarboxylase family. PSD-A subfamily. As to quaternary structure, heterodimer of a large membrane-associated beta subunit and a small pyruvoyl-containing alpha subunit. It depends on pyruvate as a cofactor. Is synthesized initially as an inactive proenzyme. Formation of the active enzyme involves a self-maturation process in which the active site pyruvoyl group is generated from an internal serine residue via an autocatalytic post-translational modification. Two non-identical subunits are generated from the proenzyme in this reaction, and the pyruvate is formed at the N-terminus of the alpha chain, which is derived from the carboxyl end of the proenzyme. The post-translation cleavage follows an unusual pathway, termed non-hydrolytic serinolysis, in which the side chain hydroxyl group of the serine supplies its oxygen atom to form the C-terminus of the beta chain, while the remainder of the serine residue undergoes an oxidative deamination to produce ammonia and the pyruvoyl prosthetic group on the alpha chain.

The protein resides in the cell membrane. The catalysed reaction is a 1,2-diacyl-sn-glycero-3-phospho-L-serine + H(+) = a 1,2-diacyl-sn-glycero-3-phosphoethanolamine + CO2. It participates in phospholipid metabolism; phosphatidylethanolamine biosynthesis; phosphatidylethanolamine from CDP-diacylglycerol: step 2/2. Functionally, catalyzes the formation of phosphatidylethanolamine (PtdEtn) from phosphatidylserine (PtdSer). This is Phosphatidylserine decarboxylase proenzyme from Bacteroides thetaiotaomicron (strain ATCC 29148 / DSM 2079 / JCM 5827 / CCUG 10774 / NCTC 10582 / VPI-5482 / E50).